Here is a 327-residue protein sequence, read N- to C-terminus: dTDP-4-dehydrorhamnose reductase (327 aa).

Residues 1-22 (MDLINGMGTSPGYWRTPREPGN) form a disordered region. NADH is bound by residues 43–45 (GMV), 69–70 (DI), and 91–93 (AYT). NADPH contacts are provided by residues 44–45 (MV), 69–70 (DI), and 91–93 (AYT). 132–133 (TD) is a binding site for dTDP-beta-L-rhamnose. NADH is bound by residues Tyr157 and Lys161. NADPH is bound by residues Tyr157 and Lys161. Tyr157 functions as the Proton donor/acceptor in the catalytic mechanism. Trp182 contributes to the dTDP-beta-L-rhamnose binding site. Positions 264–276 (PERVRPCGSDRHP) are enriched in basic and acidic residues. A disordered region spans residues 264-292 (PERVRPCGSDRHPRPAPRPSYTVLSSQRS).

Belongs to the dTDP-4-dehydrorhamnose reductase family. Mg(2+) serves as cofactor.

It carries out the reaction dTDP-beta-L-rhamnose + NADP(+) = dTDP-4-dehydro-beta-L-rhamnose + NADPH + H(+). It participates in carbohydrate biosynthesis; dTDP-L-rhamnose biosynthesis. Functionally, involved in the biosynthesis of the dTDP-L-rhamnose which is a component of the critical linker, D-N-acetylglucosamine-L-rhamnose disaccharide, which connects the galactan region of arabinogalactan to peptidoglycan via a phosphodiester linkage. Catalyzes the reduction of dTDP-6-deoxy-L-lyxo-4-hexulose to yield dTDP-L-rhamnose. The polypeptide is dTDP-4-dehydrorhamnose reductase (Mycolicibacterium smegmatis (strain ATCC 700084 / mc(2)155) (Mycobacterium smegmatis)).